We begin with the raw amino-acid sequence, 293 residues long: Bifunctional protein FolD (293 aa).

Residues 164-166 (GRS), serine 193, and threonine 234 each bind NADP(+).

Belongs to the tetrahydrofolate dehydrogenase/cyclohydrolase family. In terms of assembly, homodimer.

It carries out the reaction (6R)-5,10-methylene-5,6,7,8-tetrahydrofolate + NADP(+) = (6R)-5,10-methenyltetrahydrofolate + NADPH. The enzyme catalyses (6R)-5,10-methenyltetrahydrofolate + H2O = (6R)-10-formyltetrahydrofolate + H(+). It participates in one-carbon metabolism; tetrahydrofolate interconversion. In terms of biological role, catalyzes the oxidation of 5,10-methylenetetrahydrofolate to 5,10-methenyltetrahydrofolate and then the hydrolysis of 5,10-methenyltetrahydrofolate to 10-formyltetrahydrofolate. This Bacteroides thetaiotaomicron (strain ATCC 29148 / DSM 2079 / JCM 5827 / CCUG 10774 / NCTC 10582 / VPI-5482 / E50) protein is Bifunctional protein FolD.